Here is a 144-residue protein sequence, read N- to C-terminus: Large ribosomal subunit protein uL13 (144 aa).

It belongs to the universal ribosomal protein uL13 family. As to quaternary structure, part of the 50S ribosomal subunit.

Functionally, this protein is one of the early assembly proteins of the 50S ribosomal subunit, although it is not seen to bind rRNA by itself. It is important during the early stages of 50S assembly. The sequence is that of Large ribosomal subunit protein uL13 from Natronomonas pharaonis (strain ATCC 35678 / DSM 2160 / CIP 103997 / JCM 8858 / NBRC 14720 / NCIMB 2260 / Gabara) (Halobacterium pharaonis).